We begin with the raw amino-acid sequence, 289 residues long: 3-methyl-2-oxobutanoate hydroxymethyltransferase (289 aa).

A compositionally biased stretch (low complexity) spans 1–10 (MSDSKSSAST). The tract at residues 1–33 (MSDSKSSASTSEDRLYGSAPSHDVPKRKTRTHH) is disordered. 2 residues coordinate Mg(2+): Asp70 and Asp109. Residues 70 to 71 (DS), Asp109, and Lys139 contribute to the 3-methyl-2-oxobutanoate site. Glu141 provides a ligand contact to Mg(2+). The active-site Proton acceptor is Glu207.

This sequence belongs to the PanB family. In terms of assembly, homodecamer; pentamer of dimers. It depends on Mg(2+) as a cofactor.

The protein resides in the cytoplasm. It carries out the reaction 3-methyl-2-oxobutanoate + (6R)-5,10-methylene-5,6,7,8-tetrahydrofolate + H2O = 2-dehydropantoate + (6S)-5,6,7,8-tetrahydrofolate. Its pathway is cofactor biosynthesis; (R)-pantothenate biosynthesis; (R)-pantoate from 3-methyl-2-oxobutanoate: step 1/2. Its function is as follows. Catalyzes the reversible reaction in which hydroxymethyl group from 5,10-methylenetetrahydrofolate is transferred onto alpha-ketoisovalerate to form ketopantoate. The chain is 3-methyl-2-oxobutanoate hydroxymethyltransferase from Rhodococcus jostii (strain RHA1).